The primary structure comprises 222 residues: UPF0758 protein YicR (222 aa).

One can recognise an MPN domain in the interval 100–222 (PLLSPEMTRE…NVSFAERGWI (123 aa)). Residues histidine 171, histidine 173, and aspartate 184 each coordinate Zn(2+). The short motif at 171 to 184 (HNHPSGCAEPSKAD) is the JAMM motif element.

This sequence belongs to the UPF0758 family. YicR subfamily.

The chain is UPF0758 protein YicR from Shigella boydii serotype 18 (strain CDC 3083-94 / BS512).